We begin with the raw amino-acid sequence, 1817 residues long: Nuclear pore complex protein Nup98-Nup96 (1817 aa).

Residues 1–156 (MFNKSFGTPF…LFGPSSFTAA (156 aa)) form an FG repeats 1 region. The segment at 157–213 (PTGTTIKFNPPTGTDTMVKAGVSTNISTKHQCITAMKEYESKSLEELRLEDYQANRK) is GLEBS; interaction with RAE1. The segment at 214–480 (GPQNQVGAGT…NTTTATLGFG (267 aa)) is FG repeats 2. Positions 512-535 (PFGDSPLFRNPMSDPKKKEERLKP) are disordered. Position 524 is a phosphoserine (Ser-524). The span at 525-534 (DPKKKEERLK) shows a compositional bias: basic and acidic residues. Residue Lys-563 forms a Glycyl lysine isopeptide (Lys-Gly) (interchain with G-Cter in SUMO2) linkage. N6-acetyllysine; alternate is present on Lys-603. Lys-603 is covalently cross-linked (Glycyl lysine isopeptide (Lys-Gly) (interchain with G-Cter in SUMO2); alternate). Residues Ser-608, Ser-612, Ser-618, Ser-623, Ser-625, and Ser-653 each carry the phosphoserine modification. The interval 614 to 633 (VNRDSENLASPSEYPENGER) is disordered. The interval 662–682 (PIAKPIPQTPESAGNKHSNSN) is disordered. Lys-665 is covalently cross-linked (Glycyl lysine isopeptide (Lys-Gly) (interchain with G-Cter in SUMO2)). Thr-670 is modified (phosphothreonine). Positions 670–682 (TPESAGNKHSNSN) are enriched in polar residues. A phosphoserine mark is found at Ser-673, Ser-681, Ser-683, and Ser-839. Residues 738–880 (KVGYYTIPSM…GSWVFKVSHF (143 aa)) form the Peptidase S59 domain. The Nucleophile role is filled by Ser-881. A disordered region spans residues 886 to 937 (QDSDEEEEEHPSKTSTKKLKTAPLPPASQTTPLQMALNGKPAPPPQSQSPEV). Residues Ser-888, Ser-897, and Ser-934 each carry the phosphoserine modification. At Thr-1000 the chain carries Phosphothreonine. Ser-1023, Ser-1028, Ser-1043, Ser-1060, and Ser-1064 each carry phosphoserine. Thr-1070 is modified (phosphothreonine). Ser-1329 is modified (phosphoserine). Thr-1772 is modified (phosphothreonine).

Belongs to the nucleoporin GLFG family. Part of the nuclear pore complex (NPC). Interacts directly with NUP96. Part of the Nup160 subcomplex in the nuclear pore which is composed of NUP160, NUP133, NUP107 and NUP96; this complex plays a role in RNA export and in tethering NUP98 and NUP153 to the nucleus. Interacts with RAE1. Does not interact with TPR. Interacts with NUP88. Interacts directly with NUP88 and NUP214, subunits of the cytoplasmic filaments of the NPC. Interacts (via N-terminus) with DHX9 (via DRBM, OB-fold and RGG domains); this interaction occurs in a RNA-dependent manner and stimulates DHX9-mediated ATPase activity. In terms of assembly, (Microbial infection) Interacts with HIV-1 capsid protein P24 and nucleocapsid protein P7 (in vitro); the interaction may promote the integration of the virus in the host nucleus (in vitro). As to quaternary structure, (Microbial infection) Interacts with vesicular stomatitis virus protein M. (Microbial infection) Interacts with SARS coronavirus-2/SARS-CoV-2 ORF6 protein; the interaction blocks STAT1 nuclear translocation, antagonizes interferon signaling and blocks mRNA nuclear export (ex vivo). In terms of assembly, (Microbial infection) Interacts with SARS coronavirus/SARS-CoV ORF6 protein. Isoform 1 to isoform 4 are autoproteolytically cleaved to yield Nup98 and Nup96 or Nup98 only, respectively. Cleaved Nup98 is necessary for the targeting of Nup98 to the nuclear pore and the interaction with Nup96. Post-translationally, proteolytically degraded after poliovirus (PV) infection; degradation is partial and NCP- and TPR-binding domains withstand degradation.

The protein resides in the nucleus membrane. The protein localises to the nucleus. Its subcellular location is the nuclear pore complex. It localises to the nucleoplasm. Plays a role in the nuclear pore complex (NPC) assembly and/or maintenance. NUP98 and NUP96 are involved in the bidirectional transport across the NPC. May anchor NUP153 and TPR to the NPC. In cooperation with DHX9, plays a role in transcription and alternative splicing activation of a subset of genes. Involved in the localization of DHX9 in discrete intranuclear foci (GLFG-body). Functionally, (Microbial infection) Interacts with HIV-1 capsid protein P24 and nucleocapsid protein P7 and may thereby promote the integration of the virus in the host nucleus (in vitro). Binding affinity to HIV-1 CA-NC complexes bearing the capsid change Asn-74-Asp is reduced (in vitro). This chain is Nuclear pore complex protein Nup98-Nup96, found in Homo sapiens (Human).